The sequence spans 153 residues: 6,7-dimethyl-8-ribityllumazine synthase (153 aa).

Residues Phe23, 57–59 (AYE), and 81–83 (AVI) each bind 5-amino-6-(D-ribitylamino)uracil. Position 86 to 87 (86 to 87 (AT)) interacts with (2S)-2-hydroxy-3-oxobutyl phosphate. Residue His89 is the Proton donor of the active site. Phe113 provides a ligand contact to 5-amino-6-(D-ribitylamino)uracil. Arg127 contributes to the (2S)-2-hydroxy-3-oxobutyl phosphate binding site.

The protein belongs to the DMRL synthase family.

It carries out the reaction (2S)-2-hydroxy-3-oxobutyl phosphate + 5-amino-6-(D-ribitylamino)uracil = 6,7-dimethyl-8-(1-D-ribityl)lumazine + phosphate + 2 H2O + H(+). It participates in cofactor biosynthesis; riboflavin biosynthesis; riboflavin from 2-hydroxy-3-oxobutyl phosphate and 5-amino-6-(D-ribitylamino)uracil: step 1/2. Its function is as follows. Catalyzes the formation of 6,7-dimethyl-8-ribityllumazine by condensation of 5-amino-6-(D-ribitylamino)uracil with 3,4-dihydroxy-2-butanone 4-phosphate. This is the penultimate step in the biosynthesis of riboflavin. In Leptospira borgpetersenii serovar Hardjo-bovis (strain JB197), this protein is 6,7-dimethyl-8-ribityllumazine synthase.